The following is a 426-amino-acid chain: Endoglucanase Z (426 aa).

A signal peptide spans 1–43; the sequence is MPLSYLDKNPVIDSKKHALRKKLFLSCAYFGLSLACLSSNAWA. The interval 44–332 is catalytic; sequence SVEPLSVNGN…VKSIIQSWPY (289 aa). Residue Glu176 is the Proton donor of the active site. The Nucleophile role is filled by Glu263. A linker region spans residues 333–366; that stretch reads KAGSAASATTDPSTDTTTDTTVDEPTTTDTPATA. Positions 336 to 367 are disordered; sequence SAASATTDPSTDTTTDTTVDEPTTTDTPATAD. The interval 367 to 426 is cellulose-binding; the sequence is DCANANVYPNWVSKDWAGGQPTHNEAGQSIVYKGNLYTANWYTASVPGSDSSWTQVGSCN. Cys368 and Cys425 are oxidised to a cystine.

This sequence belongs to the glycosyl hydrolase 5 (cellulase A) family.

The protein resides in the secreted. The enzyme catalyses Endohydrolysis of (1-&gt;4)-beta-D-glucosidic linkages in cellulose, lichenin and cereal beta-D-glucans.. In terms of biological role, represents 97% of the global cellulase activity. This is Endoglucanase Z (celZ) from Dickeya dadantii (strain 3937) (Erwinia chrysanthemi (strain 3937)).